A 283-amino-acid polypeptide reads, in one-letter code: Flagellar filament 35 kDa core protein (283 aa).

This sequence belongs to the bacterial flagellin family. The flagellum consists of two outer layers around a core that contains several antigenically related polypeptides.

Its subcellular location is the periplasmic flagellum. It localises to the periplasm. In terms of biological role, component of the core of the flagella. This Leptospira interrogans serogroup Icterohaemorrhagiae serovar copenhageni (strain Fiocruz L1-130) protein is Flagellar filament 35 kDa core protein (flaB).